Consider the following 216-residue polypeptide: Proenkephalin-A-B (216 aa).

Propeptides lie at residues 64–85 (MDELYHAEPEEDDAGGEILAKN), 93–131 (EYDSNRDASDLLRELLATSGDPESAIYHDNNSETPGEMN), 144–155 (STDLEDETRGIQ), 165–175 (VGRPEWWQDYQ), and 183–207 (TRFTDSFLPSDEDGESYSKENPDME). The tract at residues 114-133 (PESAIYHDNNSETPGEMNKR) is disordered.

The protein belongs to the opioid neuropeptide precursor family. In terms of processing, the N-terminal domain contains 6 conserved cysteines thought to be involved in disulfide bonding and/or processing.

The protein resides in the secreted. Its function is as follows. Enkephalin neuropeptides compete with and mimic the effects of opiate drugs. They play a role in a number of physiologic functions, including pain perception and responses to stress. This Xenopus laevis (African clawed frog) protein is Proenkephalin-A-B (penk-b).